Here is a 427-residue protein sequence, read N- to C-terminus: Putative FBD-associated F-box protein At3g50710 (427 aa).

Residues 1-53 (MDRISNLSDDLLLKIVSSLPTKDVVVTMLLSKRWKFLWMMVPKLRFDDEFELE) enclose the F-box domain. In terms of domain architecture, FBD spans 345–395 (HWEEPSSVPQCLLFHLNIFEWKYYNAGDEEKKVVAYILKNARQLKTATFSA).

The chain is Putative FBD-associated F-box protein At3g50710 from Arabidopsis thaliana (Mouse-ear cress).